A 369-amino-acid polypeptide reads, in one-letter code: Ribonuclease D (369 aa).

The 3'-5' exonuclease domain occupies 1 to 166 (MITTNDALAA…PIAHKLMEQV (166 aa)). The HRDC domain occupies 206–285 (RPRQLACLKL…AQAQALLEDA (80 aa)).

The protein belongs to the RNase D family. A divalent metal cation is required as a cofactor.

Its subcellular location is the cytoplasm. The catalysed reaction is Exonucleolytic cleavage that removes extra residues from the 3'-terminus of tRNA to produce 5'-mononucleotides.. Its function is as follows. Exonuclease involved in the 3' processing of various precursor tRNAs. Initiates hydrolysis at the 3'-terminus of an RNA molecule and releases 5'-mononucleotides. The polypeptide is Ribonuclease D (Cronobacter turicensis (strain DSM 18703 / CCUG 55852 / LMG 23827 / z3032)).